Consider the following 398-residue polypeptide: Phosphoglycerate kinase (398 aa).

Substrate contacts are provided by residues 23–25 (DFN), arginine 38, 61–64 (HMGK), arginine 122, and arginine 155. Residues lysine 206, glycine 297, glutamate 328, and 354–357 (GGDS) contribute to the ATP site.

It belongs to the phosphoglycerate kinase family. Monomer.

It localises to the cytoplasm. It carries out the reaction (2R)-3-phosphoglycerate + ATP = (2R)-3-phospho-glyceroyl phosphate + ADP. It participates in carbohydrate degradation; glycolysis; pyruvate from D-glyceraldehyde 3-phosphate: step 2/5. This chain is Phosphoglycerate kinase, found in Clostridium botulinum (strain Hall / ATCC 3502 / NCTC 13319 / Type A).